The chain runs to 287 residues: T-cell ecto-ADP-ribosyltransferase 1 (287 aa).

Residues 1 to 20 (MPSNNFKFFLTWWLTQQVTG) form the signal peptide. Disulfide bonds link Cys41–Cys246, Cys80–Cys201, and Cys141–Cys193. In terms of domain architecture, TR mART core spans 61 to 241 (EELKLEWEKA…ISLDSPKRKK (181 aa)). NAD(+) is bound by residues Tyr98 and Arg146. Residues Arg146 and Ser167 contribute to the active site. Asn171 carries N-linked (GlcNAc...) asparagine glycosylation. Residue Ser202 coordinates NAD(+). Glu209 is a catalytic residue. N-linked (GlcNAc...) asparagine glycosylation is present at Asn256. The GPI-anchor amidated serine moiety is linked to residue Ser258. The propeptide at 259–287 (SLGSRESCVSLFLVVLLGLLVQQLTLAEP) is removed in mature form.

The protein belongs to the Arg-specific ADP-ribosyltransferase family. In terms of processing, it is proposed that in the absence of reducing agents, a disulfide bond is formed between Cys-80 and Cys-201, leading to a conformational change that reduces the catalytic rate of NAD glycohydrolysis. In terms of tissue distribution, expressed in spleen, intestine and thymus.

It localises to the cell membrane. The enzyme catalyses L-arginyl-[protein] + NAD(+) = N(omega)-(ADP-D-ribosyl)-L-arginyl-[protein] + nicotinamide + H(+). It catalyses the reaction NAD(+) + H2O = ADP-D-ribose + nicotinamide + H(+). Functionally, has both ADP-ribosyltransferase activity and thiol-dependent NAD(+) glycohydrolase activity. The sequence is that of T-cell ecto-ADP-ribosyltransferase 1 (Art2a) from Mus musculus (Mouse).